Consider the following 307-residue polypeptide: Ribonuclease Z (307 aa).

7 residues coordinate Zn(2+): H63, H65, D67, H68, H141, D212, and H270. D67 (proton acceptor) is an active-site residue.

It belongs to the RNase Z family. Homodimer. Zn(2+) is required as a cofactor.

The enzyme catalyses Endonucleolytic cleavage of RNA, removing extra 3' nucleotides from tRNA precursor, generating 3' termini of tRNAs. A 3'-hydroxy group is left at the tRNA terminus and a 5'-phosphoryl group is left at the trailer molecule.. In terms of biological role, zinc phosphodiesterase, which displays some tRNA 3'-processing endonuclease activity. Probably involved in tRNA maturation, by removing a 3'-trailer from precursor tRNA. This is Ribonuclease Z from Bacillus cereus (strain ATCC 14579 / DSM 31 / CCUG 7414 / JCM 2152 / NBRC 15305 / NCIMB 9373 / NCTC 2599 / NRRL B-3711).